The sequence spans 409 residues: UDP-N-acetylglucosamine--N-acetylmuramyl-(pentapeptide) pyrophosphoryl-undecaprenol N-acetylglucosamine transferase (409 aa).

UDP-N-acetyl-alpha-D-glucosamine is bound by residues 11 to 13, asparagine 125, arginine 169, serine 199, and glutamine 299; that span reads TGG.

The protein belongs to the glycosyltransferase 28 family. MurG subfamily.

The protein resides in the cell membrane. It catalyses the reaction di-trans,octa-cis-undecaprenyl diphospho-N-acetyl-alpha-D-muramoyl-L-alanyl-D-glutamyl-meso-2,6-diaminopimeloyl-D-alanyl-D-alanine + UDP-N-acetyl-alpha-D-glucosamine = di-trans,octa-cis-undecaprenyl diphospho-[N-acetyl-alpha-D-glucosaminyl-(1-&gt;4)]-N-acetyl-alpha-D-muramoyl-L-alanyl-D-glutamyl-meso-2,6-diaminopimeloyl-D-alanyl-D-alanine + UDP + H(+). Its pathway is cell wall biogenesis; peptidoglycan biosynthesis. Cell wall formation. Catalyzes the transfer of a GlcNAc subunit on undecaprenyl-pyrophosphoryl-MurNAc-pentapeptide (lipid intermediate I) to form undecaprenyl-pyrophosphoryl-MurNAc-(pentapeptide)GlcNAc (lipid intermediate II). The polypeptide is UDP-N-acetylglucosamine--N-acetylmuramyl-(pentapeptide) pyrophosphoryl-undecaprenol N-acetylglucosamine transferase (Clostridioides difficile (strain 630) (Peptoclostridium difficile)).